The chain runs to 37 residues: Cytochrome b6-f complex subunit 5 (37 aa).

Residues Leu5–Ala25 form a helical membrane-spanning segment.

Belongs to the PetG family. The 4 large subunits of the cytochrome b6-f complex are cytochrome b6, subunit IV (17 kDa polypeptide, PetD), cytochrome f and the Rieske protein, while the 4 small subunits are PetG, PetL, PetM and PetN. The complex functions as a dimer.

The protein localises to the plastid. Its subcellular location is the chloroplast thylakoid membrane. Its function is as follows. Component of the cytochrome b6-f complex, which mediates electron transfer between photosystem II (PSII) and photosystem I (PSI), cyclic electron flow around PSI, and state transitions. PetG is required for either the stability or assembly of the cytochrome b6-f complex. In Porphyra purpurea (Red seaweed), this protein is Cytochrome b6-f complex subunit 5.